A 194-amino-acid polypeptide reads, in one-letter code: uncharacterized protein (194 aa).

An N-terminal signal peptide occupies residues 1–20 (MLYKFTVLLLIYSYLRNLQA). 4 N-linked (GlcNAc...) asparagine; by host glycosylation sites follow: Asn31, Asn72, Asn133, and Asn157.

This is an uncharacterized protein from Ostreid herpesvirus 1 (isolate France) (OsHV-1).